Consider the following 411-residue polypeptide: uncharacterized protein (411 aa).

This is an uncharacterized protein from Magallana gigas (Pacific oyster).